Consider the following 454-residue polypeptide: Probable 1,4-beta-D-glucan cellobiohydrolase C (454 aa).

An N-terminal signal peptide occupies residues 1-19; sequence MKHLASSIALTLLLPAVQA. Residues 20–55 enclose the CBM1 domain; that stretch reads QQTVWGQCGGQGWSGPTSCVAGAACSTLNPYYAQCI. Disulfide bonds link Cys-27–Cys-44 and Cys-38–Cys-54. 2 thr-rich linker regions span residues 59–94 and 95–454; these read TATS…PTVT and ASGN…NPSF. The tract at residues 68 to 95 is disordered; it reads TTAATTTSQTTTKPTTTGPTTSAPTVTA. The active site involves Asp-184. 2 cysteine pairs are disulfide-bonded: Cys-185–Cys-244 and Cys-376–Cys-423. The active-site Proton donor is Asp-230. Asp-409 acts as the Nucleophile in catalysis. Asn-413 is a glycosylation site (N-linked (GlcNAc...) asparagine).

The protein belongs to the glycosyl hydrolase 6 (cellulase B) family.

It is found in the secreted. It carries out the reaction Hydrolysis of (1-&gt;4)-beta-D-glucosidic linkages in cellulose and cellotetraose, releasing cellobiose from the non-reducing ends of the chains.. Its function is as follows. The biological conversion of cellulose to glucose generally requires three types of hydrolytic enzymes: (1) Endoglucanases which cut internal beta-1,4-glucosidic bonds; (2) Exocellobiohydrolases that cut the disaccharide cellobiose from the non-reducing end of the cellulose polymer chain; (3) Beta-1,4-glucosidases which hydrolyze the cellobiose and other short cello-oligosaccharides to glucose. This is Probable 1,4-beta-D-glucan cellobiohydrolase C (cbhC) from Aspergillus fumigatus (strain CBS 144.89 / FGSC A1163 / CEA10) (Neosartorya fumigata).